We begin with the raw amino-acid sequence, 329 residues long: Ribosomal RNA small subunit methyltransferase H (329 aa).

S-adenosyl-L-methionine is bound by residues 34-36 (GGY), D52, F79, D100, and Q107. Residues 285-329 (GEDEVAHNPRARSAKLRAAERTSAPAHKDDQSSSWPRLSDVMRGG) form a disordered region.

It belongs to the methyltransferase superfamily. RsmH family.

It localises to the cytoplasm. It carries out the reaction cytidine(1402) in 16S rRNA + S-adenosyl-L-methionine = N(4)-methylcytidine(1402) in 16S rRNA + S-adenosyl-L-homocysteine + H(+). Specifically methylates the N4 position of cytidine in position 1402 (C1402) of 16S rRNA. The protein is Ribosomal RNA small subunit methyltransferase H of Bradyrhizobium diazoefficiens (strain JCM 10833 / BCRC 13528 / IAM 13628 / NBRC 14792 / USDA 110).